The sequence spans 225 residues: Doublesex- and mab-3-related transcription factor C1 (225 aa).

Residues 1-12 (MQRPSGSREVRK) show a composition bias toward basic and acidic residues. Disordered regions lie at residues 1-49 (MQRP…SHVH) and 179-216 (QTRHQPCGMPGTAGERGLQLPNPSMPPRPASSGSLPSG). Basic residues predominate over residues 27-37 (RVKKHVVRRQK).

It belongs to the DMRT family.

This chain is Doublesex- and mab-3-related transcription factor C1 (Dmrtc1), found in Rattus norvegicus (Rat).